A 212-amino-acid chain; its full sequence is Cytidylate kinase (212 aa).

7–15 (GPAASGKGT) contributes to the ATP binding site.

This sequence belongs to the cytidylate kinase family. Type 1 subfamily.

The protein localises to the cytoplasm. It catalyses the reaction CMP + ATP = CDP + ADP. It carries out the reaction dCMP + ATP = dCDP + ADP. The protein is Cytidylate kinase of Rhodopseudomonas palustris (strain TIE-1).